We begin with the raw amino-acid sequence, 314 residues long: Peroxidase 2 (314 aa).

The first 23 residues, 1 to 23 (MASASSVSLMLLVAAAMASAASA), serve as a signal peptide directing secretion. Residue Q24 is modified to Pyrrolidone carboxylic acid. 4 disulfide bridges follow: C34–C109, C67–C72, C115–C310, and C194–C219. Catalysis depends on H65, which acts as the Proton acceptor. 5 residues coordinate Ca(2+): D66, V69, G71, D73, and S75. N148 carries an N-linked (GlcNAc...) asparagine glycan. P157 provides a ligand contact to substrate. N169 is a glycosylation site (N-linked (GlcNAc...) asparagine). H187 contacts heme b. Residue T188 participates in Ca(2+) binding. N203 carries an N-linked (GlcNAc...) asparagine glycan. Ca(2+) contacts are provided by D234, T237, and D242. 2 N-linked (GlcNAc...) asparagine glycosylation sites follow: N274 and N309.

This sequence belongs to the peroxidase family. Classical plant (class III) peroxidase subfamily. It depends on Ca(2+) as a cofactor. Requires heme b as cofactor.

The protein resides in the secreted. It catalyses the reaction 2 a phenolic donor + H2O2 = 2 a phenolic radical donor + 2 H2O. Functionally, removal of H(2)O(2), oxidation of toxic reductants, biosynthesis and degradation of lignin, suberization, auxin catabolism, response to environmental stresses such as wounding, pathogen attack and oxidative stress. These functions might be dependent on each isozyme/isoform in each plant tissue. The protein is Peroxidase 2 (PRX112) of Oryza sativa subsp. japonica (Rice).